The sequence spans 65 residues: Large ribosomal subunit protein uL29c (65 aa).

This sequence belongs to the universal ribosomal protein uL29 family.

The protein resides in the plastid. The protein localises to the chloroplast. This is Large ribosomal subunit protein uL29c (rpl29) from Guillardia theta (Cryptophyte).